A 375-amino-acid chain; its full sequence is Outer membrane porin OmpD (375 aa).

Positions 1 to 34 (MRKHAKKIIRIIKMKLKLVAVAVTSLLAAGVVNA) are cleaved as a signal peptide.

It belongs to the Gram-negative porin family. Homotrimer. Mixed heterotrimers with other porins are also probable.

The protein localises to the cell outer membrane. Forms pores that allow passive diffusion of small molecules across the outer membrane. The chain is Outer membrane porin OmpD from Salmonella typhimurium (strain SL1344).